The primary structure comprises 593 residues: UvrABC system protein C (593 aa).

The 78-residue stretch at 17 to 94 (MEPGCYLMKD…IKQYQPRYNI (78 aa)) folds into the GIY-YIG domain. A UVR domain is found at 199–234 (KTILKSLEERMLTASESLDFERAKEYRDLIQHIQNL).

The protein belongs to the UvrC family. In terms of assembly, interacts with UvrB in an incision complex.

It is found in the cytoplasm. The UvrABC repair system catalyzes the recognition and processing of DNA lesions. UvrC both incises the 5' and 3' sides of the lesion. The N-terminal half is responsible for the 3' incision and the C-terminal half is responsible for the 5' incision. The polypeptide is UvrABC system protein C (Staphylococcus aureus (strain MSSA476)).